Consider the following 287-residue polypeptide: Bifunctional protein FolD (287 aa).

Residues 166-168 (GAS) and Ile-232 contribute to the NADP(+) site.

This sequence belongs to the tetrahydrofolate dehydrogenase/cyclohydrolase family. As to quaternary structure, homodimer.

The catalysed reaction is (6R)-5,10-methylene-5,6,7,8-tetrahydrofolate + NADP(+) = (6R)-5,10-methenyltetrahydrofolate + NADPH. It carries out the reaction (6R)-5,10-methenyltetrahydrofolate + H2O = (6R)-10-formyltetrahydrofolate + H(+). It participates in one-carbon metabolism; tetrahydrofolate interconversion. In terms of biological role, catalyzes the oxidation of 5,10-methylenetetrahydrofolate to 5,10-methenyltetrahydrofolate and then the hydrolysis of 5,10-methenyltetrahydrofolate to 10-formyltetrahydrofolate. In Pectobacterium atrosepticum (strain SCRI 1043 / ATCC BAA-672) (Erwinia carotovora subsp. atroseptica), this protein is Bifunctional protein FolD.